The primary structure comprises 447 residues: Signal recognition particle 54 kDa protein (447 aa).

GTP contacts are provided by residues 103-110 (GVQGSGKT), 185-189 (DTAGR), and 245-248 (TKMD).

The protein belongs to the GTP-binding SRP family. SRP54 subfamily. As to quaternary structure, part of the signal recognition particle protein translocation system, which is composed of SRP and FtsY. Archaeal SRP consists of a 7S RNA molecule of 300 nucleotides and two protein subunits: SRP54 and SRP19.

The protein localises to the cytoplasm. The enzyme catalyses GTP + H2O = GDP + phosphate + H(+). Involved in targeting and insertion of nascent membrane proteins into the cytoplasmic membrane. Binds to the hydrophobic signal sequence of the ribosome-nascent chain (RNC) as it emerges from the ribosomes. The SRP-RNC complex is then targeted to the cytoplasmic membrane where it interacts with the SRP receptor FtsY. The polypeptide is Signal recognition particle 54 kDa protein (Saccharolobus islandicus (strain Y.G.57.14 / Yellowstone #1) (Sulfolobus islandicus)).